The chain runs to 186 residues: NADH-quinone oxidoreductase subunit B (186 aa).

Cys44, Cys45, Cys110, and Cys139 together coordinate [4Fe-4S] cluster.

Belongs to the complex I 20 kDa subunit family. In terms of assembly, NDH-1 is composed of 14 different subunits. Subunits NuoB, C, D, E, F, and G constitute the peripheral sector of the complex. [4Fe-4S] cluster serves as cofactor.

It localises to the cell inner membrane. It catalyses the reaction a quinone + NADH + 5 H(+)(in) = a quinol + NAD(+) + 4 H(+)(out). NDH-1 shuttles electrons from NADH, via FMN and iron-sulfur (Fe-S) centers, to quinones in the respiratory chain. The immediate electron acceptor for the enzyme in this species is believed to be ubiquinone. Couples the redox reaction to proton translocation (for every two electrons transferred, four hydrogen ions are translocated across the cytoplasmic membrane), and thus conserves the redox energy in a proton gradient. This chain is NADH-quinone oxidoreductase subunit B, found in Leptospira interrogans serogroup Icterohaemorrhagiae serovar copenhageni (strain Fiocruz L1-130).